The primary structure comprises 139 residues: Invertebrate-type lysozyme 2 (139 aa).

An N-terminal signal peptide occupies residues 1 to 18 (MFVKAILLLSIAVAYASA). The 120-residue stretch at 19–138 (DCLHCICMRE…WKGVHSCCGC (120 aa)) folds into the I-type lysozyme domain. Disulfide bonds link C20-C106, C23-C138, C25-C31, C36-C45, C58-C86, C76-C82, and C98-C120. Residue E28 is the Proton donor of the active site. D39 acts as the Nucleophile in catalysis. Substrate is bound at residue 51–57 (KIPYYED). Residues Y90 and 113–115 (HNG) each bind substrate.

Belongs to the glycosyl hydrolase 22 family. Type-I lysozyme subfamily. In terms of tissue distribution, expressed in pharyngeal muscle cell pm3, nerve ring and intestine.

It catalyses the reaction Hydrolysis of (1-&gt;4)-beta-linkages between N-acetylmuramic acid and N-acetyl-D-glucosamine residues in a peptidoglycan and between N-acetyl-D-glucosamine residues in chitodextrins.. Has bacteriolytic activity against Gram-positive bacteria. May play a role in resistance to Gram-positive bacterium S.aureus infection. The sequence is that of Invertebrate-type lysozyme 2 from Caenorhabditis elegans.